The chain runs to 449 residues: Phosphomannomutase (449 aa).

Ser-97 functions as the Phosphoserine intermediate in the catalytic mechanism. Mg(2+) is bound by residues Ser-97, Asp-237, Asp-239, and Asp-241.

This sequence belongs to the phosphohexose mutase family. Mg(2+) serves as cofactor.

The enzyme catalyses alpha-D-mannose 1-phosphate = D-mannose 6-phosphate. It functions in the pathway amino-acid biosynthesis. In terms of biological role, catalyzes the formation of mannose-1-P from mannose-6-P. Can also use glucose-6-P. This chain is Phosphomannomutase (manB), found in Methanocaldococcus jannaschii (strain ATCC 43067 / DSM 2661 / JAL-1 / JCM 10045 / NBRC 100440) (Methanococcus jannaschii).